The chain runs to 199 residues: DnaJ homolog subfamily C member 5B (199 aa).

Residues Ser-14 and Ser-16 each carry the phosphoserine modification. Residues 19–84 (ALYEILGLQK…SKRNIYDKYG (66 aa)) enclose the J domain.

As to quaternary structure, interacts with the chaperone complex consisting of HSC70 and SGTA. Palmitoylated.

The protein resides in the membrane. The polypeptide is DnaJ homolog subfamily C member 5B (DNAJC5B) (Ailuropoda melanoleuca (Giant panda)).